A 209-amino-acid chain; its full sequence is Uracil phosphoribosyltransferase (209 aa).

Residues Arg-77, Arg-102, and 129-137 (DPMLATGVS) contribute to the 5-phospho-alpha-D-ribose 1-diphosphate site. Uracil-binding positions include Ile-192 and 197-199 (GDA). Asp-198 contributes to the 5-phospho-alpha-D-ribose 1-diphosphate binding site.

This sequence belongs to the UPRTase family. Requires Mg(2+) as cofactor.

The catalysed reaction is UMP + diphosphate = 5-phospho-alpha-D-ribose 1-diphosphate + uracil. It functions in the pathway pyrimidine metabolism; UMP biosynthesis via salvage pathway; UMP from uracil: step 1/1. Its activity is regulated as follows. Allosterically activated by GTP. In terms of biological role, catalyzes the conversion of uracil and 5-phospho-alpha-D-ribose 1-diphosphate (PRPP) to UMP and diphosphate. This Metamycoplasma arthritidis (strain 158L3-1) (Mycoplasma arthritidis) protein is Uracil phosphoribosyltransferase.